A 312-amino-acid polypeptide reads, in one-letter code: Envelope glycoprotein K (312 aa).

The first 20 residues, 1-20 (MLLGGRPLHLLVLGVMGAYA), serve as a signal peptide directing secretion. Topologically, residues 21–91 (GLGAYYATVA…VVYARRDCRA (71 aa)) are extracellular. Asn-58 and Asn-67 each carry an N-linked (GlcNAc...) asparagine; by host glycan. Residues 92–112 (YLWDVHFRLAAVAWLLYAAFV) form a helical membrane-spanning segment. Residues 113-187 (YARQERRMFG…DPITLAHRHP (75 aa)) lie on the Cytoplasmic side of the membrane. A helical transmembrane segment spans residues 188–208 (TLIALILLELGLRLGARMALF). The Extracellular portion of the chain corresponds to 209–227 (TTLGVTRAPCALVFPLYAR). Residues 228–248 (ALVWIFVLAVGALELLAATLP) traverse the membrane as a helical segment. Topologically, residues 249–280 (HIARVSGATATPARSDGGRAALGVCGACCSTV) are cytoplasmic. The helical transmembrane segment at 281–301 (LAGIFAKALYLCLLVGGVLLF) threads the bilayer. Residues 302–312 (LHYERHITIFG) lie on the Extracellular side of the membrane.

The protein belongs to the alphaherpesvirinae glycoprotein K family. Interacts (via UL20 interaction region) with protein UL20 homolog (via N-terminus); this interaction probably plays a role in the coordinate transport of protein UL20 homolog and gK to the trans-Golgi network (TGN), and is required for the cell surface expression of gK. In terms of processing, N-glycosylated.

The protein localises to the host cell membrane. The protein resides in the host endosome membrane. It is found in the host Golgi apparatus membrane. In terms of biological role, glycoprotein that probably modulates membrane fusion events during secondary envelopment of cytoplasmic capsids that bud into specific trans-Golgi network (TGN)-derived membranes. The polypeptide is Envelope glycoprotein K (gK) (Sus scrofa (Pig)).